Reading from the N-terminus, the 506-residue chain is Cysteine protease 1 (506 aa).

The tract at residues 1–21 (MTSSRPSGRDSTGWQETVSNT) is disordered. Catalysis depends on Cys-226, which acts as the Nucleophile. Active-site residues include Asp-399 and His-401.

The protein belongs to the peptidase C54 family.

It localises to the cytoplasm. The protein resides in the nucleus. Its subcellular location is the preautophagosomal structure. The enzyme catalyses [protein]-C-terminal L-amino acid-glycyl-phosphatidylethanolamide + H2O = [protein]-C-terminal L-amino acid-glycine + a 1,2-diacyl-sn-glycero-3-phosphoethanolamine. Its function is as follows. Cysteine protease that plays a key role in cytoplasm to vacuole transport (Cvt) and autophagy by mediating both proteolytic activation and delipidation of ATG8. Required for selective autophagic degradation of the nucleus (nucleophagy) as well as for mitophagy which contributes to regulate mitochondrial quantity and quality by eliminating the mitochondria to a basal level to fulfill cellular energy requirements and preventing excess ROS production. The protease activity is required for proteolytic activation of ATG8: cleaves the C-terminal amino acid of ATG8 to reveal a C-terminal glycine. ATG8 ubiquitin-like activity requires the exposure of the glycine at the C-terminus for its conjugation to phosphatidylethanolamine (PE) and its insertion to membranes, which is necessary for autophagy. The ATG8-PE conjugate mediates tethering between adjacent membranes and stimulates membrane hemifusion, leading to expansion of the autophagosomal membrane during autophagy. In addition to the protease activity, also catalyzes deconjugation of PE-conjugated forms of ATG8 during macroautophagy: ATG8 delipidation is required to release the protein from membranes, which facilitates multiple events during macroautophagy, and especially for efficient autophagosome biogenesis, the assembly of ATG9-containing tubulovesicular clusters into phagophores/autophagosomes, and for the disassembly of PAS-associated ATG components. ATG8 delipidation by ATG4 also recycles ATG8-PE generated on inappropriate membranes to maintain a reservoir of unlipidated ATG8 that is required for autophagosome formation at the PAS. The polypeptide is Cysteine protease 1 (cpr-1) (Neurospora crassa (strain ATCC 24698 / 74-OR23-1A / CBS 708.71 / DSM 1257 / FGSC 987)).